The chain runs to 219 residues: Large ribosomal subunit protein uL16y (219 aa).

The protein belongs to the universal ribosomal protein uL16 family. As to quaternary structure, component of the small ribosomal subunit. Mature ribosomes consist of a small (40S) and a large (60S) subunit. The 40S subunit contains about 33 different proteins and 1 molecule of RNA (18S). The 60S subunit contains about 49 different proteins and 3 molecules of RNA (25S, 5.8S and 5S).

The protein is Large ribosomal subunit protein uL16y (SG12) of Oryza sativa subsp. japonica (Rice).